The chain runs to 495 residues: UPF0371 protein cgR_2887 (495 aa).

The protein belongs to the UPF0371 family.

This is UPF0371 protein cgR_2887 from Corynebacterium glutamicum (strain R).